Consider the following 217-residue polypeptide: Vacuolar protein-sorting-associated protein 37 homolog 1 (217 aa).

Residues 1-49 (MFNFWGSKDQQQGQSRPQEASSQSPWYSPSLVSSPSSSRPQSSGQISAQ) are disordered. The segment covering 8 to 20 (KDQQQGQSRPQEA) has biased composition (polar residues). Residues 21 to 47 (SSQSPWYSPSLVSSPSSSRPQSSGQIS) show a composition bias toward low complexity. A VPS37 C-terminal domain is found at 137–217 (QEKLNELERQ…IHLAAKTSNI (81 aa)).

This sequence belongs to the VPS37 family. As to quaternary structure, component of the endosomal sorting required for transport complex I (ESCRT-I), composed of ELC, VPS28 and VPS37. Interacts with ELC.

The protein localises to the endosome. Component of the ESCRT-I complex (endosomal sorting complex required for transport I), a regulator of vesicular trafficking process. Required for the sorting of endocytic ubiquitinated cargos into multivesicular bodies (MVBs). This Arabidopsis thaliana (Mouse-ear cress) protein is Vacuolar protein-sorting-associated protein 37 homolog 1 (VPS37-1).